The sequence spans 993 residues: Ephrin type-A receptor 7 (993 aa).

The first 27 residues, 1 to 27, serve as a signal peptide directing secretion; sequence MVLRSRLPPWIMLCSVWLLRFAHTGEA. The Extracellular portion of the chain corresponds to 28 to 550; sequence QAAKEVILLD…TAVSSEQNPV (523 aa). In terms of domain architecture, Eph LBD spans 32 to 210; sequence EVILLDSKAQ…YYKKCWSIIE (179 aa). Fibronectin type-III domains follow at residues 331 to 441 and 442 to 537; these read PPSA…TGQA and APSQ…TLEE. Residues asparagine 343 and asparagine 410 are each glycosylated (N-linked (GlcNAc...) asparagine). The chain crosses the membrane as a helical span at residues 551-571; that stretch reads IIIAVVAVAGTIILVFMVFGF. Residues 572–993 are Cytoplasmic-facing; that stretch reads IIGRRHCGYS…LHLHGTGIQV (422 aa). Residues tyrosine 603 and tyrosine 609 each carry the phosphotyrosine; by autocatalysis modification. One can recognise a Protein kinase domain in the interval 628-889; the sequence is IKIERVIGAG…QIVGILDKMI (262 aa). Residues 634–642 and lysine 660 contribute to the ATP site; that span reads IGAGEFGEV. The Proton acceptor role is filled by aspartate 753. Tyrosine 786 and tyrosine 935 each carry phosphotyrosine; by autocatalysis. The SAM domain maps to 918-982; sequence TTFCSVGEWL…MSSIQTMRAQ (65 aa). The short motif at 991–993 is the PDZ-binding element; the sequence is IQV.

This sequence belongs to the protein kinase superfamily. Tyr protein kinase family. Ephrin receptor subfamily. As to quaternary structure, heterotetramer upon binding of the ligand. The heterotetramer is composed of an ephrin dimer and a receptor dimer. Oligomerization is probably required to induce biological responses. Phosphorylated.

Its subcellular location is the cell membrane. It carries out the reaction L-tyrosyl-[protein] + ATP = O-phospho-L-tyrosyl-[protein] + ADP + H(+). Receptor tyrosine kinase which binds promiscuously GPI-anchored ephrin-A family ligands residing on adjacent cells, leading to contact-dependent bidirectional signaling into neighboring cells. The signaling pathway downstream of the receptor is referred to as forward signaling while the signaling pathway downstream of the ephrin ligand is referred to as reverse signaling. Among GPI-anchored ephrin-A ligands, EFNA5 is a cognate/functional ligand for EPHA7 and their interaction regulates brain development modulating cell-cell adhesion and repulsion. Has a repellent activity on axons and is for instance involved in the guidance of corticothalamic axons and in the proper topographic mapping of retinal axons to the colliculus. May also regulate brain development through a caspase(CASP3)-dependent proapoptotic activity. Forward signaling may result in activation of components of the ERK signaling pathway including MAP2K1, MAP2K2, MAPK1 and MAPK3 which are phosphorylated upon activation of EPHA7. The polypeptide is Ephrin type-A receptor 7 (EPHA7) (Gallus gallus (Chicken)).